The sequence spans 222 residues: C-reactive protein (222 aa).

Residues 1–19 (MEKLSLCLLVIISLSNAFA) form the signal peptide. Position 20 is a pyrrolidone carboxylic acid (Gln20). Residues 24–222 (IGKAFVFPKE…EVYVKPQLWP (199 aa)) form the Pentraxin (PTX) domain. Cys55 and Cys113 form a disulfide bridge. Ca(2+) contacts are provided by Asn78, Glu154, Gln155, Asp156, and Gln166.

The protein belongs to the pentraxin family. As to quaternary structure, homopentamer. Pentraxin (or pentaxin) have a discoid arrangement of 5 non-covalently bound subunits. Interacts with FCN1; may regulate monocyte activation by FCN1. Requires Ca(2+) as cofactor. In terms of tissue distribution, found in plasma.

The protein localises to the secreted. In terms of biological role, displays several functions associated with host defense: it promotes agglutination, bacterial capsular swelling, phagocytosis and complement fixation through its calcium-dependent binding to phosphorylcholine. Can interact with DNA and histones and may scavenge nuclear material released from damaged circulating cells. The sequence is that of C-reactive protein (CRP) from Sus scrofa (Pig).